We begin with the raw amino-acid sequence, 159 residues long: Nucleotide-binding protein Psyr_4087 (159 aa).

This sequence belongs to the YajQ family.

In terms of biological role, nucleotide-binding protein. The sequence is that of Nucleotide-binding protein Psyr_4087 from Pseudomonas syringae pv. syringae (strain B728a).